The following is a 468-amino-acid chain: UDP-N-acetylmuramate--L-alanine ligase (468 aa).

112–118 (GTHGKTT) provides a ligand contact to ATP.

It belongs to the MurCDEF family.

The protein resides in the cytoplasm. The catalysed reaction is UDP-N-acetyl-alpha-D-muramate + L-alanine + ATP = UDP-N-acetyl-alpha-D-muramoyl-L-alanine + ADP + phosphate + H(+). It functions in the pathway cell wall biogenesis; peptidoglycan biosynthesis. Its function is as follows. Cell wall formation. The sequence is that of UDP-N-acetylmuramate--L-alanine ligase from Bordetella avium (strain 197N).